A 1160-amino-acid chain; its full sequence is MSNEELSALAPVGPAAYVYFTKTNHEMNEVLATLSLCDSSSPVVIAPLLMGLTVDQDFCTSVRTPVVCYDGGVLTKVTSFCPFALYFYNTQGIVDFSEPHGDVQRLCDETRQRYAIESYMPEEGRAPTDLAALCTAAGCDPQEVLVHVVVGNGMKEFMYAGQLIPCFEEAAPTRLNDCDAVRVPLYPPTLFGSLQADVDSDELSLDKRSSFVESRGLYVPAVSETLFYYVYTSWCQALRFSETKVLIEAALKQFVNDSQQSVKLAPHKKYFGYTSQKLSSLEKDHLMLSDAVICELGFSFASVFLDSAYGASDSMVYSEWPVVVNATDHRDLIRALTELKLHLSTHISALLFSCNSILYHNRLVYLTSNKNASGTGASQEVLLKSIHFANGLTGLCEDTYNDARKLIKCSGVVAKDERYAPYHLSLICGTCPQLFSAFIWYLNRVSVYNTGLTGSSTLSNHLIGCSSSLCGACGGTCCHTCYNTAFVRVQTRLPQMPRLPKKEPSVVVMQSRFLNDVDVLGTFGRRYSAESKEASLDAKADEGSASTSNRTASSSVDRTHRLNRILDYCKKMRLIDSVTGEDTMTINGRSDFINLVSSLNKFVDDEAMSFVSEVRMKSNRDEVLGATQAFNLDLNPFAVSFSPILAYEYYRVIFAIIQNVALITATSYIVDNPLTTSLVSRWVTQHFQSIHGAFSTTSSRKGFLFIRNVKSSKNADHDRLPDFKLYARGTYSVISMEIKLSRLSVPSLLMFRVKNRPISKASKGTTAHVFFRREHVPKKNPVKGCLGFLLYKYHDKLFPDCGFSCLQFWQKVCANALPKNVNIGDMGEFNNFVKFVISVTADYNEHDLIDVPPDCMLNYLENRFHNKFLCFYGFKDYIGTLHGLTTRLTYQNHAQFPYLLGESPNFASAADFALRLKDLKATGVTAPLASTVTRESLMRTIFEQRSLVTVSFSIEKYAGVNNNKEIYQFGQIGYFSGNGVERSLNTNSIGGQDYKFMRQRCILATKLSDVLIKRSRRDNVLFDEDIIKNRVMAALDSENLDVDPELMAMYEILSTREEIPERDDVLFFVDGCQAVADSLMEKFSRLQEMGVDDFSLVNLQQVLDSRPECGGGGGEVHDLSALFTAASGEAVGNSVGLNARGGEHAFDEDCGLLPAKRGRL.

The short motif at 808–809 (FW) is the Required for filament formation element. A required for nuclear localization region spans residues 1139–1160 (ARGGEHAFDEDCGLLPAKRGRL).

This sequence belongs to the herpesviridae major DNA-binding protein family. As to quaternary structure, homooligomers. Forms double-helical filaments necessary for the formation of replication compartments within the host nucleus. Interacts with the origin-binding protein. Interacts with the helicase primase complex; this interaction stimulates primer synthesis activity of the helicase-primase complex. Interacts with the DNA polymerase. Interacts with the alkaline exonuclease; this interaction increases its nuclease processivity.

The protein localises to the host nucleus. Single-stranded DNA-binding protein required for DNA replication. In terms of biological role, plays several crucial roles in viral infection. Participates in the opening of the viral DNA origin to initiate replication by interacting with the origin-binding protein. May disrupt loops, hairpins and other secondary structures present on ssDNA to reduce and eliminate pausing of viral DNA polymerase at specific sites during elongation. Promotes viral DNA recombination by performing strand-transfer, characterized by the ability to transfer a DNA strand from a linear duplex to a complementary single-stranded DNA circle. Can also catalyze the renaturation of complementary single strands. Additionally, reorganizes the host cell nucleus, leading to the formation of prereplicative sites and replication compartments. This process is driven by the protein which can form double-helical filaments in the absence of DNA. The chain is Major DNA-binding protein from Simian cytomegalovirus (strain Colburn).